The following is a 158-amino-acid chain: Trafficking protein particle complex subunit 6B (158 aa).

This sequence belongs to the TRAPP small subunits family. BET3 subfamily. In terms of assembly, homodimer. Part of a TRAPP complex. Heterodimer with TRAPPC3. The heterodimer TRAPPC6B-TRAPPC3 interacts with TRAPPC1 likely providing a core for TRAPP complex formation. Widely expressed. Expressed in lung, heart, liver, spleen, brain and kidney.

Its subcellular location is the golgi apparatus. The protein resides in the cis-Golgi network. It localises to the endoplasmic reticulum. In terms of biological role, component of a transport protein particle (TRAPP) complex that may function in specific stages of inter-organelle traffic. Specifically involved in the early development of neural circuitry, likely by controlling the frequency and amplitude of intracellular calcium transients implicated in the regulation of neuron differentiation and survival. This Mus musculus (Mouse) protein is Trafficking protein particle complex subunit 6B.